The following is a 541-amino-acid chain: Chaperonin GroEL 2 (541 aa).

ATP is bound by residues 29–32 (TLGP), 86–90 (DGTTT), Gly413, 476–478 (NAA), and Asp492.

It belongs to the chaperonin (HSP60) family. As to quaternary structure, forms a cylinder of 14 subunits composed of two heptameric rings stacked back-to-back. Interacts with the co-chaperonin GroES.

It localises to the secreted. The protein resides in the capsule. The protein localises to the cell surface. Its subcellular location is the cell wall. It catalyses the reaction ATP + H2O + a folded polypeptide = ADP + phosphate + an unfolded polypeptide.. Functionally, together with its co-chaperonin GroES, plays an essential role in assisting protein folding. The GroEL-GroES system forms a nano-cage that allows encapsulation of the non-native substrate proteins and provides a physical environment optimized to promote and accelerate protein folding. The protein is Chaperonin GroEL 2 of Mycobacterium sp. (strain KMS).